The chain runs to 421 residues: Acetylglutamate kinase (421 aa).

The interval 1–252 (MASAKEISQY…PLESSVSITR (252 aa)) is acetylglutamate kinase. Residues 59–60 (AG), R81, and N170 contribute to the substrate site. The N-acetyltransferase domain maps to 274–420 (ERVIRATTWK…HCTQHPPTLI (147 aa)).

The protein in the N-terminal section; belongs to the acetylglutamate kinase family. ArgB subfamily.

The protein resides in the cytoplasm. The enzyme catalyses N-acetyl-L-glutamate + ATP = N-acetyl-L-glutamyl 5-phosphate + ADP. It participates in amino-acid biosynthesis; L-arginine biosynthesis; N(2)-acetyl-L-ornithine from L-glutamate: step 2/4. In Xylella fastidiosa (strain Temecula1 / ATCC 700964), this protein is Acetylglutamate kinase (argB).